The sequence spans 57 residues: Metallothionein (57 aa).

It belongs to the metallothionein superfamily. Type 14 family.

In terms of biological role, this protein complexes cadmium, zinc and copper. This Thermostichus vulcanus (Synechococcus vulcanus) protein is Metallothionein (mtnA).